Consider the following 59-residue polypeptide: Large ribosomal subunit protein uL30 (59 aa).

Belongs to the universal ribosomal protein uL30 family. As to quaternary structure, part of the 50S ribosomal subunit.

This Rhodococcus erythropolis (strain PR4 / NBRC 100887) protein is Large ribosomal subunit protein uL30.